The following is a 186-amino-acid chain: UPF0303 protein ZMO1353 (186 aa).

It belongs to the UPF0303 family.

The chain is UPF0303 protein ZMO1353 from Zymomonas mobilis subsp. mobilis (strain ATCC 31821 / ZM4 / CP4).